The following is a 244-amino-acid chain: Adenosylcobinamide-GDP ribazoletransferase (244 aa).

5 consecutive transmembrane segments (helical) span residues 31-51, 55-75, 109-129, 134-154, and 188-208; these read LLFYPVVGLLFGLLLWLASHL, APAPLHAALLLALWVLLSGAL, IAVVVLVLVLLLKFCALWVLV, GGWLVLAPVVGRAAMLGLFMG, and VVLGGSPGLWMLLLSLGVFLW.

It belongs to the CobS family. It depends on Mg(2+) as a cofactor.

Its subcellular location is the cell inner membrane. The catalysed reaction is alpha-ribazole + adenosylcob(III)inamide-GDP = adenosylcob(III)alamin + GMP + H(+). The enzyme catalyses alpha-ribazole 5'-phosphate + adenosylcob(III)inamide-GDP = adenosylcob(III)alamin 5'-phosphate + GMP + H(+). The protein operates within cofactor biosynthesis; adenosylcobalamin biosynthesis; adenosylcobalamin from cob(II)yrinate a,c-diamide: step 7/7. In terms of biological role, joins adenosylcobinamide-GDP and alpha-ribazole to generate adenosylcobalamin (Ado-cobalamin). Also synthesizes adenosylcobalamin 5'-phosphate from adenosylcobinamide-GDP and alpha-ribazole 5'-phosphate. The sequence is that of Adenosylcobinamide-GDP ribazoletransferase from Pseudomonas entomophila (strain L48).